The chain runs to 358 residues: Probable branched-chain-amino-acid aminotransferase (358 aa).

N6-(pyridoxal phosphate)lysine is present on Lys196.

This sequence belongs to the class-IV pyridoxal-phosphate-dependent aminotransferase family. It depends on pyridoxal 5'-phosphate as a cofactor.

It catalyses the reaction L-leucine + 2-oxoglutarate = 4-methyl-2-oxopentanoate + L-glutamate. It carries out the reaction L-isoleucine + 2-oxoglutarate = (S)-3-methyl-2-oxopentanoate + L-glutamate. The catalysed reaction is L-valine + 2-oxoglutarate = 3-methyl-2-oxobutanoate + L-glutamate. It participates in amino-acid biosynthesis; L-isoleucine biosynthesis; L-isoleucine from 2-oxobutanoate: step 4/4. Its pathway is amino-acid biosynthesis; L-leucine biosynthesis; L-leucine from 3-methyl-2-oxobutanoate: step 4/4. The protein operates within amino-acid biosynthesis; L-valine biosynthesis; L-valine from pyruvate: step 4/4. In terms of biological role, acts on leucine, isoleucine and valine. The polypeptide is Probable branched-chain-amino-acid aminotransferase (ilvE) (Staphylococcus epidermidis (strain ATCC 12228 / FDA PCI 1200)).